A 1366-amino-acid polypeptide reads, in one-letter code: DNA-directed RNA polymerase subunit beta' (1366 aa).

A compositionally biased stretch (basic residues) spans 1 to 23; it reads MTSSKPKKSSRVRKTSKNSKKNN. Residues 1–25 form a disordered region; the sequence is MTSSKPKKSSRVRKTSKNSKKNNKI. 4 residues coordinate Zn(2+): C248, C315, C322, and C325. A disordered region spans residues 1290–1366; sequence DYTVDMPQSP…LQEEGLLSDE (77 aa). The segment covering 1295–1305 has biased composition (polar residues); it reads MPQSPTVSSTA. Low complexity predominate over residues 1354–1366; that stretch reads LEGLQEEGLLSDE.

Belongs to the RNA polymerase beta' chain family. RpoC2 subfamily. In terms of assembly, in cyanobacteria the RNAP catalytic core is composed of 2 alpha, 1 beta, 1 beta', 1 gamma and 1 omega subunit. When a sigma factor is associated with the core the holoenzyme is formed, which can initiate transcription. Zn(2+) is required as a cofactor.

It carries out the reaction RNA(n) + a ribonucleoside 5'-triphosphate = RNA(n+1) + diphosphate. DNA-dependent RNA polymerase catalyzes the transcription of DNA into RNA using the four ribonucleoside triphosphates as substrates. The protein is DNA-directed RNA polymerase subunit beta' of Prochlorococcus marinus (strain MIT 9515).